The primary structure comprises 87 residues: Large ribosomal subunit protein bL27 (87 aa).

The segment at 1 to 21 (MAHKKAGGSSRNGRDSESKRL) is disordered.

The protein belongs to the bacterial ribosomal protein bL27 family.

The protein is Large ribosomal subunit protein bL27 of Burkholderia mallei (strain NCTC 10247).